A 170-amino-acid polypeptide reads, in one-letter code: Small ribosomal subunit protein bS16 (170 aa).

The disordered stretch occupies residues 109 to 170 (ALAEAEGGPS…AAESEAPAAE (62 aa)). Basic and acidic residues predominate over residues 131–150 (AKKDEQPTEKAAEPAAEKAA). A compositionally biased stretch (low complexity) spans 151-170 (EPAAEAPAEAAAESEAPAAE).

It belongs to the bacterial ribosomal protein bS16 family.

The protein is Small ribosomal subunit protein bS16 of Mycolicibacterium gilvum (strain PYR-GCK) (Mycobacterium gilvum (strain PYR-GCK)).